A 101-amino-acid polypeptide reads, in one-letter code: NADH-quinone oxidoreductase subunit K (101 aa).

3 consecutive transmembrane segments (helical) span residues 4–24 (LGHM…GIFL), 30–50 (IVLL…FVAF), and 62–82 (FVFF…AILV).

This sequence belongs to the complex I subunit 4L family. As to quaternary structure, NDH-1 is composed of 14 different subunits. Subunits NuoA, H, J, K, L, M, N constitute the membrane sector of the complex.

It is found in the cell inner membrane. It catalyses the reaction a quinone + NADH + 5 H(+)(in) = a quinol + NAD(+) + 4 H(+)(out). Its function is as follows. NDH-1 shuttles electrons from NADH, via FMN and iron-sulfur (Fe-S) centers, to quinones in the respiratory chain. The immediate electron acceptor for the enzyme in this species is believed to be ubiquinone. Couples the redox reaction to proton translocation (for every two electrons transferred, four hydrogen ions are translocated across the cytoplasmic membrane), and thus conserves the redox energy in a proton gradient. This is NADH-quinone oxidoreductase subunit K from Stenotrophomonas maltophilia (strain R551-3).